We begin with the raw amino-acid sequence, 289 residues long: Serine/threonine-protein phosphatase Pgam5, mitochondrial (289 aa).

Belongs to the phosphoglycerate mutase family. BPG-dependent PGAM subfamily. As to quaternary structure, interacts with Pk92B/ASK1.

It is found in the mitochondrion outer membrane. The enzyme catalyses O-phospho-L-seryl-[protein] + H2O = L-seryl-[protein] + phosphate. It catalyses the reaction O-phospho-L-threonyl-[protein] + H2O = L-threonyl-[protein] + phosphate. Functionally, displays phosphatase activity for serine/threonine residues, and dephosphorylates and activates Pk92B kinase. Has apparently no phosphoglycerate mutase activity. The protein is Serine/threonine-protein phosphatase Pgam5, mitochondrial of Drosophila grimshawi (Hawaiian fruit fly).